The following is a 460-amino-acid chain: 3-isopropylmalate dehydratase large subunit (460 aa).

3 residues coordinate [4Fe-4S] cluster: Cys341, Cys401, and Cys404.

This sequence belongs to the aconitase/IPM isomerase family. LeuC type 1 subfamily. Heterodimer of LeuC and LeuD. [4Fe-4S] cluster is required as a cofactor.

The catalysed reaction is (2R,3S)-3-isopropylmalate = (2S)-2-isopropylmalate. The protein operates within amino-acid biosynthesis; L-leucine biosynthesis; L-leucine from 3-methyl-2-oxobutanoate: step 2/4. In terms of biological role, catalyzes the isomerization between 2-isopropylmalate and 3-isopropylmalate, via the formation of 2-isopropylmaleate. This Phocaeicola vulgatus (strain ATCC 8482 / DSM 1447 / JCM 5826 / CCUG 4940 / NBRC 14291 / NCTC 11154) (Bacteroides vulgatus) protein is 3-isopropylmalate dehydratase large subunit.